We begin with the raw amino-acid sequence, 77 residues long: Protein NS4 (77 aa).

It is found in the host cytoplasm. Its subcellular location is the host nucleus. The protein resides in the host nucleolus. Its function is as follows. May function as a nucleic acid binding protein that modulates transcription of genes participating in the IFN response. This chain is Protein NS4 (Segment-9), found in Antilocapra americana (Pronghorn).